The chain runs to 433 residues: Adenylosuccinate synthetase (433 aa).

GTP is bound by residues 11-17 (GDEGKGK) and 39-41 (GHT). D12 functions as the Proton acceptor in the catalytic mechanism. D12 and G39 together coordinate Mg(2+). Residues 12-15 (DEGK), 37-40 (NAGH), T134, R148, N230, T245, and R309 each bind IMP. Residue H40 is the Proton donor of the active site. Position 305–311 (305–311 (VTTGRKR)) interacts with substrate. GTP is bound by residues R311, 337 to 339 (KLD), and 419 to 421 (GTG).

The protein belongs to the adenylosuccinate synthetase family. Homodimer. Mg(2+) is required as a cofactor.

Its subcellular location is the cytoplasm. It catalyses the reaction IMP + L-aspartate + GTP = N(6)-(1,2-dicarboxyethyl)-AMP + GDP + phosphate + 2 H(+). It functions in the pathway purine metabolism; AMP biosynthesis via de novo pathway; AMP from IMP: step 1/2. In terms of biological role, plays an important role in the de novo pathway and in the salvage pathway of purine nucleotide biosynthesis. Catalyzes the first committed step in the biosynthesis of AMP from IMP. This Saccharomyces cerevisiae (strain YJM789) (Baker's yeast) protein is Adenylosuccinate synthetase.